The following is a 122-amino-acid chain: HLLQFNKMIKFETRRNAIPPYAFYGCYCGWGGRGRPKDATDRCCFVHDCCYGKLAKCNTKWDFYRYSLKSGYITCGKGTWCEEQICECDRVAAECLRRSLSTYRYGYMIYPDSRCRGPSETC.

Cystine bridges form between cysteine 26–cysteine 115, cysteine 28–cysteine 44, cysteine 43–cysteine 95, cysteine 49–cysteine 122, cysteine 50–cysteine 88, cysteine 57–cysteine 81, and cysteine 75–cysteine 86. Ca(2+) is bound by residues tyrosine 27, glycine 29, and glycine 31. The active site involves histidine 47. Position 48 (aspartate 48) interacts with Ca(2+). Aspartate 89 is a catalytic residue.

As to quaternary structure, heterodimer of one acidic (CA also named crotapotin) and one basic (CB) subunits; non-covalently linked. Ca(2+) serves as cofactor. In terms of tissue distribution, expressed by the venom gland.

The protein resides in the secreted. The catalysed reaction is a 1,2-diacyl-sn-glycero-3-phosphocholine + H2O = a 1-acyl-sn-glycero-3-phosphocholine + a fatty acid + H(+). Its function is as follows. Heterodimer CA-CB: Crotoxin is a potent presynaptic neurotoxin that possesses phospholipase A2 (PLA2) activity and exerts a lethal action by blocking neuromuscular transmission. It consists of a non-covalent association of a basic and weakly toxic PLA2 subunit (CB), with a small acidic, non-enzymatic and non-toxic subunit (CA also named crotapotin). The complex acts by binding to a specific 48-kDa protein (R48) receptor located on presynaptic membranes, forming a transient ternary complex CA-CB-R48, followed by dissociation of the CA-CB complex and release of the CA subunit. At equilibrium, only the CB subunits remain associated with the specific crotoxin receptor. In addition to neurotoxicity, crotoxin has been found to exert nephrotoxicity, and cardiovascular toxicity. Moreover, anti-inflammatory, immunomodulatory, anti-tumor and analgesic effects of crotoxin have also been reported. Monomer CB: The basic subunit of crotoxin is a snake venom phospholipase A2 (PLA2) that exhibits weak neurotoxicity and strong anticoagulant effects by binding to factor Xa (F10) and inhibiting the prothrombinase activity. In addition, it exerts myotoxicity, nephrotoxicity, and cardiovascular toxicity as well as anti-inflammatory, immunomodulatory, anti-tumor and analgesic effects. Also shows a strong antimicrobial activity against X.axonopodis passiforae (Gram-negative) which is completely dependent on the enzymatic activity. PLA2 catalyzes the calcium-dependent hydrolysis of the 2- acyl groups in 3-sn-phosphoglycerides. The chain is Phospholipase A2 crotoxin basic chain from Crotalus durissus collilineatus (Brazilian rattlesnake).